The primary structure comprises 451 residues: Uronate isomerase (451 aa).

The protein belongs to the metallo-dependent hydrolases superfamily. Uronate isomerase family. In terms of assembly, homotrimer.

It carries out the reaction D-glucuronate = D-fructuronate. It catalyses the reaction aldehydo-D-galacturonate = keto-D-tagaturonate. Its pathway is carbohydrate metabolism; pentose and glucuronate interconversion. The sequence is that of Uronate isomerase from Thermotoga maritima (strain ATCC 43589 / DSM 3109 / JCM 10099 / NBRC 100826 / MSB8).